The chain runs to 287 residues: rRNA adenine N-6-methyltransferase (287 aa).

The span at 1–13 (MKKKNHKYRGKKL) shows a compositional bias: basic residues. The segment at 1-21 (MKKKNHKYRGKKLNRGESPNF) is disordered. Residues His25, Met27, Gly52, Glu73, Asp98, and Asn114 each coordinate S-adenosyl-L-methionine.

The protein belongs to the class I-like SAM-binding methyltransferase superfamily. rRNA adenine N(6)-methyltransferase family.

Involved in erythromycin resistance. The sequence is that of rRNA adenine N-6-methyltransferase (ermD) from Bacillus licheniformis.